The following is a 256-amino-acid chain: Putative adhesin P1-like protein MPN_132 (256 aa).

Positions 56–72 (AVSESQAATSSTTTTAT) are enriched in low complexity. 2 disordered regions span residues 56–115 (AVSE…PYLH) and 149–235 (FGTD…EVVG). Over residues 96 to 112 (KASTQGSGQTNSQNTSP) the composition is skewed to polar residues. Low complexity-rich tracts occupy residues 155–179 (TQPQ…LGSV) and 211–222 (STSDGNTSSTNN).

The protein belongs to the adhesin P1 family.

The sequence is that of Putative adhesin P1-like protein MPN_132 from Mycoplasma pneumoniae (strain ATCC 29342 / M129 / Subtype 1) (Mycoplasmoides pneumoniae).